The sequence spans 228 residues: Deoxyribose-phosphate aldolase (228 aa).

Asp-96 acts as the Proton donor/acceptor in catalysis. Lys-157 functions as the Schiff-base intermediate with acetaldehyde in the catalytic mechanism. Lys-185 functions as the Proton donor/acceptor in the catalytic mechanism.

This sequence belongs to the DeoC/FbaB aldolase family. DeoC type 1 subfamily.

It localises to the cytoplasm. It carries out the reaction 2-deoxy-D-ribose 5-phosphate = D-glyceraldehyde 3-phosphate + acetaldehyde. The protein operates within carbohydrate degradation; 2-deoxy-D-ribose 1-phosphate degradation; D-glyceraldehyde 3-phosphate and acetaldehyde from 2-deoxy-alpha-D-ribose 1-phosphate: step 2/2. Catalyzes a reversible aldol reaction between acetaldehyde and D-glyceraldehyde 3-phosphate to generate 2-deoxy-D-ribose 5-phosphate. This Cyanothece sp. (strain PCC 7425 / ATCC 29141) protein is Deoxyribose-phosphate aldolase.